A 217-amino-acid chain; its full sequence is Probable transaldolase (217 aa).

Catalysis depends on Lys83, which acts as the Schiff-base intermediate with substrate.

Belongs to the transaldolase family. Type 3B subfamily.

The protein resides in the cytoplasm. The enzyme catalyses D-sedoheptulose 7-phosphate + D-glyceraldehyde 3-phosphate = D-erythrose 4-phosphate + beta-D-fructose 6-phosphate. It functions in the pathway carbohydrate degradation; pentose phosphate pathway; D-glyceraldehyde 3-phosphate and beta-D-fructose 6-phosphate from D-ribose 5-phosphate and D-xylulose 5-phosphate (non-oxidative stage): step 2/3. Functionally, transaldolase is important for the balance of metabolites in the pentose-phosphate pathway. This Caulobacter sp. (strain K31) protein is Probable transaldolase.